The chain runs to 452 residues: Pup--protein ligase (452 aa).

Glu9 contributes to the Mg(2+) binding site. Arg53 is a binding site for ATP. Tyr55 contributes to the Mg(2+) binding site. Asp57 acts as the Proton acceptor in catalysis. Mg(2+) is bound at residue Glu63. 2 residues coordinate ATP: Thr66 and Trp419.

It belongs to the Pup ligase/Pup deamidase family. Pup-conjugating enzyme subfamily.

It catalyses the reaction ATP + [prokaryotic ubiquitin-like protein]-L-glutamate + [protein]-L-lysine = ADP + phosphate + N(6)-([prokaryotic ubiquitin-like protein]-gamma-L-glutamyl)-[protein]-L-lysine.. The protein operates within protein degradation; proteasomal Pup-dependent pathway. Its pathway is protein modification; protein pupylation. In terms of biological role, catalyzes the covalent attachment of the prokaryotic ubiquitin-like protein modifier Pup to the proteasomal substrate proteins, thereby targeting them for proteasomal degradation. This tagging system is termed pupylation. The ligation reaction involves the side-chain carboxylate of the C-terminal glutamate of Pup and the side-chain amino group of a substrate lysine. This Nocardia farcinica (strain IFM 10152) protein is Pup--protein ligase.